We begin with the raw amino-acid sequence, 517 residues long: T-complex protein 11-like protein 2 (517 aa).

The interval M1–G59 is disordered. Phosphoserine is present on S16. The segment covering D17 to S55 has biased composition (low complexity).

The protein belongs to the TCP11 family. Interacts with FMNL2; this interaction promotes muscle-derived satellite cell (MDSC) migration and differentiation.

It localises to the cytoplasm. Its subcellular location is the cytoskeleton. Functionally, promotes the migration of muscle-derived satellite cells (MDSCs) during differentiation throught interaction with FMNL2 and therefore may participate in microfilament assembly. The protein is T-complex protein 11-like protein 2 of Rattus norvegicus (Rat).